Consider the following 382-residue polypeptide: Sialidase (382 aa).

Residue arginine 37 participates in substrate binding. Cysteine 42 and cysteine 103 are disulfide-bonded. Aspartate 62 (proton acceptor) is an active-site residue. 3 BNR repeats span residues 71–82 (ARSTDGGKTWNK), 145–156 (YKSTDDGVTFSK), and 210–220 (IYSTDGITWSL). Arginine 246 serves as a coordination point for substrate. The BNR 4 repeat unit spans residues 254-265 (FETKDFGKTWTE). Residue arginine 309 coordinates substrate. The Nucleophile role is filled by tyrosine 342. Residue glutamate 361 is part of the active site.

Belongs to the glycosyl hydrolase 33 family. As to quaternary structure, monomer.

The catalysed reaction is Hydrolysis of alpha-(2-&gt;3)-, alpha-(2-&gt;6)-, alpha-(2-&gt;8)- glycosidic linkages of terminal sialic acid residues in oligosaccharides, glycoproteins, glycolipids, colominic acid and synthetic substrates.. Its function is as follows. Cleaves the terminal sialic acid (N-acetyl neuraminic acid) from carbohydrate chains in glycoproteins providing free sialic acid which can be used as carbon and energy sources. Sialidases have been suggested to be pathogenic factors in microbial infections. The chain is Sialidase (nanH) from Salmonella typhimurium (strain LT2 / SGSC1412 / ATCC 700720).